A 277-amino-acid chain; its full sequence is tRNA (guanine-N(7)-)-methyltransferase (277 aa).

The disordered stretch occupies residues 1–37 (MAGTETGDAAGTEAPQPQKRYYRQRAHSNPMADHTLR). S28 is subject to Phosphoserine. S-adenosyl-L-methionine contacts are provided by G85, E108, R110, N141, A142, and L161. The active site involves D164. An alphaC helix region spans residues 165–173 (PHFKRTKHK). Positions 239 and 241 each coordinate S-adenosyl-L-methionine. Positions 239–247 (TEEGKKVLR) are alpha6 helix.

Belongs to the class I-like SAM-binding methyltransferase superfamily. TrmB family. Catalytic component of the METTL1-WDR4 complex, composed of METTL1 and WDR4. Phosphorylation at Ser-28 by PKB/AKT1 inactivates its methyltransferase activity via a steric interference mechanism in the active site that locally disrupts the catalytic center. Phosphorylation at Ser-28 does not affect the interaction with WDR4.

Its subcellular location is the nucleus. The enzyme catalyses guanosine(46) in tRNA + S-adenosyl-L-methionine = N(7)-methylguanosine(46) in tRNA + S-adenosyl-L-homocysteine. It catalyses the reaction a guanosine in mRNA + S-adenosyl-L-methionine = an N(7)-methylguanosine in mRNA + S-adenosyl-L-homocysteine. It carries out the reaction a guanosine in miRNA + S-adenosyl-L-methionine = an N(7)-methylguanosine in miRNA + S-adenosyl-L-homocysteine. It functions in the pathway tRNA modification; N(7)-methylguanine-tRNA biosynthesis. In terms of biological role, catalytic component of METTL1-WDR4 methyltransferase complex that mediates the formation of N(7)-methylguanine in a subset of RNA species, such as tRNAs, mRNAs and microRNAs (miRNAs). Catalyzes the formation of N(7)-methylguanine at position 46 (m7G46) in a large subset of tRNAs that contain the 5'-RAGGU-3' motif within the variable loop. M7G46 interacts with C13-G22 in the D-loop to stabilize tRNA tertiary structure and protect tRNAs from decay. Also acts as a methyltransferase for a subset of internal N(7)-methylguanine in mRNAs. Internal N(7)-methylguanine methylation of mRNAs in response to stress promotes their relocalization to stress granules, thereby suppressing their translation. Also methylates a specific subset of miRNAs, such as let-7. N(7)-methylguanine methylation of let-7 miRNA promotes let-7 miRNA processing by disrupting an inhibitory secondary structure within the primary miRNA transcript (pri-miRNA). Acts as a regulator of embryonic stem cell self-renewal and differentiation. The protein is tRNA (guanine-N(7)-)-methyltransferase of Bos taurus (Bovine).